Here is a 345-residue protein sequence, read N- to C-terminus: UDP-3-O-acylglucosamine N-acyltransferase (345 aa).

The active-site Proton acceptor is His-237.

This sequence belongs to the transferase hexapeptide repeat family. LpxD subfamily. As to quaternary structure, homotrimer.

The catalysed reaction is a UDP-3-O-[(3R)-3-hydroxyacyl]-alpha-D-glucosamine + a (3R)-hydroxyacyl-[ACP] = a UDP-2-N,3-O-bis[(3R)-3-hydroxyacyl]-alpha-D-glucosamine + holo-[ACP] + H(+). It functions in the pathway bacterial outer membrane biogenesis; LPS lipid A biosynthesis. Its function is as follows. Catalyzes the N-acylation of UDP-3-O-acylglucosamine using 3-hydroxyacyl-ACP as the acyl donor. Is involved in the biosynthesis of lipid A, a phosphorylated glycolipid that anchors the lipopolysaccharide to the outer membrane of the cell. The protein is UDP-3-O-acylglucosamine N-acyltransferase of Geobacter sp. (strain M21).